The primary structure comprises 304 residues: N-acetylmuramic acid 6-phosphate etherase (304 aa).

Positions 60 to 221 (GVSVLRHGGR…STAVMVRLGY (162 aa)) constitute an SIS domain. The active-site Proton donor is the Glu-88. Residue Glu-119 is part of the active site.

It belongs to the GCKR-like family. MurNAc-6-P etherase subfamily. Homodimer.

The catalysed reaction is N-acetyl-D-muramate 6-phosphate + H2O = N-acetyl-D-glucosamine 6-phosphate + (R)-lactate. Its pathway is amino-sugar metabolism; N-acetylmuramate degradation. Functionally, specifically catalyzes the cleavage of the D-lactyl ether substituent of MurNAc 6-phosphate, producing GlcNAc 6-phosphate and D-lactate. The chain is N-acetylmuramic acid 6-phosphate etherase from Thermobifida fusca (strain YX).